The primary structure comprises 198 residues: RxLR effector protein Htp1 (198 aa).

Residues 1-23 (MRIHHPLTLAALCVVLHESLGAA) form the signal peptide. The RxLR signature appears at 46-49 (RHLR). Disordered stretches follow at residues 48-101 (LRSD…TPMK) and 115-198 (TKNA…PTFD). Asn70 is a glycosylation site (N-linked (GlcNAc...) asparagine). Positions 70-91 (NNSQEQATTGNSVETNQVPSTE) are enriched in polar residues. Residues 126-137 (DDDDSDFSDDDV) show a composition bias toward acidic residues. A compositionally biased stretch (low complexity) spans 173-191 (APTNAPTGTDAPTDAPTDA).

It belongs to the RxLR effector family. In terms of assembly, interacts with the effector Htp3 within the host cells.

It localises to the secreted. The protein resides in the host cell. Effector involved in the disease saprolegniosis in salmonids and other freshwater fish, resulting in considerable economic losses in aquaculture. Within the host fish cells, Htp1 is involved in the uptake of the S.parasitica effector Htp3 at a neutral pH (pH 7.5) and its release from vesicles into host cytosol where it degrades nucleic acids. This is RxLR effector protein Htp1 from Saprolegnia parasitica (strain CBS 223.65).